The following is a 452-amino-acid chain: NADH-ubiquinone oxidoreductase chain 4 (452 aa).

Helical transmembrane passes span 4–24 (LVLG…SMVW), 29–49 (VGSV…MTIS), 59–79 (FVSL…LLAS), 88–110 (LIYQ…LAFM), 114–136 (LLLF…TRWG), 144–164 (AGTY…ICLI), 182–202 (VFQL…AFLV), 221–241 (PIAG…YGMM), 252–272 (MLSS…MGGI), 282–304 (LIAY…GVAW), 309–331 (AMVL…NLWY), 345–365 (LIMI…MNMA), 390–410 (IVYM…LFGM), and 432–452 (LLTT…GLMF).

Belongs to the complex I subunit 4 family.

It is found in the mitochondrion membrane. The enzyme catalyses a ubiquinone + NADH + 5 H(+)(in) = a ubiquinol + NAD(+) + 4 H(+)(out). Its function is as follows. Core subunit of the mitochondrial membrane respiratory chain NADH dehydrogenase (Complex I) that is believed to belong to the minimal assembly required for catalysis. Complex I functions in the transfer of electrons from NADH to the respiratory chain. The immediate electron acceptor for the enzyme is believed to be ubiquinone. This is NADH-ubiquinone oxidoreductase chain 4 (ND4) from Branchiostoma lanceolatum (Common lancelet).